The sequence spans 313 residues: Porphobilinogen deaminase (313 aa).

Cysteine 242 carries the post-translational modification S-(dipyrrolylmethanemethyl)cysteine.

The protein belongs to the HMBS family. In terms of assembly, monomer. It depends on dipyrromethane as a cofactor.

The catalysed reaction is 4 porphobilinogen + H2O = hydroxymethylbilane + 4 NH4(+). It participates in porphyrin-containing compound metabolism; protoporphyrin-IX biosynthesis; coproporphyrinogen-III from 5-aminolevulinate: step 2/4. Functionally, tetrapolymerization of the monopyrrole PBG into the hydroxymethylbilane pre-uroporphyrinogen in several discrete steps. The protein is Porphobilinogen deaminase of Yersinia pseudotuberculosis serotype O:3 (strain YPIII).